The sequence spans 343 residues: Anthranilate phosphoribosyltransferase (343 aa).

Residues Gly-84, 87-88, Thr-92, 94-97, 112-120, and Ser-124 each bind 5-phospho-alpha-D-ribose 1-diphosphate; these read GD, NIST, and KHGNRGVSS. Gly-84 is an anthranilate binding site. Ser-96 is a binding site for Mg(2+). Position 115 (Asn-115) interacts with anthranilate. Position 170 (Arg-170) interacts with anthranilate. Mg(2+) is bound by residues Asp-229 and Glu-230.

It belongs to the anthranilate phosphoribosyltransferase family. In terms of assembly, homodimer. Mg(2+) is required as a cofactor.

It carries out the reaction N-(5-phospho-beta-D-ribosyl)anthranilate + diphosphate = 5-phospho-alpha-D-ribose 1-diphosphate + anthranilate. It functions in the pathway amino-acid biosynthesis; L-tryptophan biosynthesis; L-tryptophan from chorismate: step 2/5. Its function is as follows. Catalyzes the transfer of the phosphoribosyl group of 5-phosphorylribose-1-pyrophosphate (PRPP) to anthranilate to yield N-(5'-phosphoribosyl)-anthranilate (PRA). This chain is Anthranilate phosphoribosyltransferase, found in Burkholderia ambifaria (strain ATCC BAA-244 / DSM 16087 / CCUG 44356 / LMG 19182 / AMMD) (Burkholderia cepacia (strain AMMD)).